Consider the following 182-residue polypeptide: Vacuolar protein sorting-associated protein 29 (182 aa).

At K50 the chain carries N6-acetyllysine.

Belongs to the VPS29 family. Component of the commander complex consisting of the CCC subcomplex and the retriever subcomplex. Component of the heterotrimeric retriever complex formed by VPS26C, VPS29 and VPS35L; within the complex interacts with VPS35L. Component of the heterotrimeric retromer cargo-selective complex (CSC), also described as vacuolar protein sorting subcomplex (VPS), formed by VPS26 (VPS26A or VPS26B), VPS29 and VPS35. The CSC has a highly elongated structure with VPS26 and VPS29 binding independently at opposite distal ends of VPS35 as central platform. The CSC is believed to associate with variable sorting nexins to form functionally distinct retromer complex variants. The originally described retromer complex (also called SNX-BAR retromer) is a pentamer containing the CSC and a heterodimeric membrane-deforming subcomplex formed between SNX1 or SNX2 and SNX5 or SNX6 (also called SNX-BAR subcomplex); the respective CSC and SNX-BAR subcomplexes associate with low affinity. The CSC associates with SNX3 to form a SNX3-retromer complex. The CSC associates with SNX27, the WASH complex and the SNX-BAR subcomplex to form the SNX27-retromer complex. Interacts with VPS26A, VPS35, SNX1, SNX2, SNX3, SNX27, WASHC5. Interacts with TBC1D5; this interaction is blocked by VPS35L in the retriever complex. Interacts with SNX17; the interaction is indirect; SNX17 (via its C-terminus) interacts with the retriever complex (via VPS26C and VPS35L). Interacts with VPS26B and ANKRD27.

The protein resides in the cytoplasm. Its subcellular location is the membrane. It localises to the endosome membrane. It is found in the early endosome. The protein localises to the late endosome. Functionally, component of the commander complex that is essential for endosomal recycling of transmembrane cargos; the commander complex is composed of the CCC subcomplex and the retriever subcomplex. Component of the retriever complex, which is a heterotrimeric complex related to retromer cargo-selective complex (CSC) and essential for retromer-independent retrieval and recycling of numerous cargos such as integrin alpha-5/beta-1 (ITGA5:ITGB1). Component of the retromer cargo-selective complex (CSC). The CSC is believed to be the core functional component of retromer or respective retromer complex variants acting to prevent missorting of selected transmembrane cargo proteins into the lysosomal degradation pathway. The recruitment of the CSC to the endosomal membrane involves RAB7A and SNX3. The SNX-BAR retromer mediates retrograde transport of cargo proteins from endosomes to the trans-Golgi network (TGN) and is involved in endosome-to-plasma membrane transport for cargo protein recycling. The SNX3-retromer mediates the retrograde endosome-to-TGN transport of WLS distinct from the SNX-BAR retromer pathway. The SNX27-retromer is believed to be involved in endosome-to-plasma membrane trafficking and recycling of a broad spectrum of cargo proteins. The CSC seems to act as recruitment hub for other proteins, such as the WASH complex and TBC1D5. Required to regulate transcytosis of the polymeric immunoglobulin receptor (pIgR-pIgA). In the endosomes, retriever complex drives the retrieval and recycling of NxxY-motif-containing cargo proteins by coupling to SNX17, a cargo essential for the homeostatic maintenance of numerous cell surface proteins associated with processes that include cell migration, cell adhesion, nutrient supply and cell signaling. The recruitment of the retriever complex to the endosomal membrane involves CCC and WASH complexes. Involved in GLUT1 endosome-to-plasma membrane trafficking; the function is dependent of association with ANKRD27. The polypeptide is Vacuolar protein sorting-associated protein 29 (Rattus norvegicus (Rat)).